Here is a 426-residue protein sequence, read N- to C-terminus: Glucan 1,3-beta-glucosidase (426 aa).

Residues 1–20 form the signal peptide; that stretch reads MLYPRALLPAAVALASLVLA. The Proton donor role is filled by Glu208. 2 cysteine pairs are disulfide-bonded: Cys290–Cys416 and Cys315–Cys343. Glu307 functions as the Nucleophile in the catalytic mechanism.

Belongs to the glycosyl hydrolase 5 (cellulase A) family.

The protein localises to the secreted. It catalyses the reaction Successive hydrolysis of beta-D-glucose units from the non-reducing ends of (1-&gt;3)-beta-D-glucans, releasing alpha-glucose.. Its function is as follows. Beta-glucanases participate in the metabolism of beta-glucan, the main structural component of the cell wall. It could also function biosynthetically as a transglycosylase. The chain is Glucan 1,3-beta-glucosidase from Blumeria graminis (Powdery mildew).